We begin with the raw amino-acid sequence, 203 residues long: Snake venom metalloproteinase fibrolase (203 aa).

Gln1 is modified (pyrrolidone carboxylic acid). One can recognise a Peptidase M12B domain in the interval 7 to 203 (RYVQLVIVAD…NNPQCILNKP (197 aa)). 3 disulfide bridges follow: Cys118/Cys198, Cys158/Cys182, and Cys160/Cys165. His143 lines the Zn(2+) pocket. The active site involves Glu144. Residues His147 and His153 each coordinate Zn(2+).

This sequence belongs to the venom metalloproteinase (M12B) family. P-I subfamily. In terms of assembly, monomer. Requires Zn(2+) as cofactor. Expressed by the venom gland.

Its subcellular location is the secreted. It catalyses the reaction Hydrolysis of 14-Ala-|-Leu-15 in insulin B chain and 413-Lys-|-Leu-414 in alpha-chain of fibrinogen.. With respect to regulation, is inhibited by EDTA, o-phenanthroline and tetraethylenepentamine. Snake venom zinc metalloprotease that exhibits direct fibrinolytic activity. This chain is Snake venom metalloproteinase fibrolase, found in Agkistrodon contortrix contortrix (Southern copperhead).